We begin with the raw amino-acid sequence, 80 residues long: Toxin Acra I-3 (80 aa).

The first 22 residues, 1-22 (MMKLVLLSVIVILFSLIGSIHG), serve as a signal peptide directing secretion. Residues 25–80 (VPGNYPLDSSGNKYPCTVLGDNQSCIDVCKKHGVKYGYCYGFKCWCEYLKDKNVSL) enclose the LCN-type CS-alpha/beta domain. Disulfide bonds link C40/C63, C49/C68, and C53/C70.

Belongs to the long (3 C-C) scorpion toxin superfamily. Sodium/Potassium channel inhibitor family. Expressed by the venom gland.

It localises to the secreted. Functionally, probable neurotoxin that inhibits ion channels. Is toxic to mice. In Androctonus crassicauda (Arabian fat-tailed scorpion), this protein is Toxin Acra I-3.